Reading from the N-terminus, the 186-residue chain is ADP-ribosylation factor-like protein 8B (186 aa).

Residues M1 to E19 constitute an intramembrane region (note=Mediates targeting to membranes). Residues Q29–T35, D71–Q75, and N130–D133 each bind GTP. K141 is covalently cross-linked (Glycyl lysine isopeptide (Lys-Gly) (interchain with G-Cter in ubiquitin)).

This sequence belongs to the small GTPase superfamily. Arf family. As to quaternary structure, interacts with tubulin. Interacts with BORCS5; recruits ARL8B to lysosomes. Interacts with VPS41; the interaction mediates the recruitment of the HOPS complex to lysosomes. Interacts (GTP-bound form) with PLEKHM2 (via RUN domain); the interaction is required to recruit the motor protein kinesin-1 on lysosomes. Interacts (GTP-bound form) with PLEKHM1 (via RUN domain); the interaction is required for PLEKHM1 localization to lysosomes and for ARL8B function in delivery and degradation of endocytic and autophagic cargo in lysosomes. PLEKHM1 and PLEKHM2 compete for interaction with ARL8B. Interacts (GTP-bound form) with RUFY1; the interaction is required for RUFY1 endosomal location. When GTP-bound, interacts with RUFY3 and RUFY4, but not with RUFY1, nor RUFY2. Ubiquitinated at Lys-141 by RNF167, leading to its degradation.

The protein localises to the late endosome membrane. It localises to the lysosome membrane. The protein resides in the cytoplasm. It is found in the cytoskeleton. Its subcellular location is the spindle. The protein localises to the cell projection. It localises to the axon. The protein resides in the synapse. It is found in the cytolytic granule membrane. Its subcellular location is the early endosome membrane. The enzyme catalyses GTP + H2O = GDP + phosphate + H(+). Its function is as follows. Small GTPase which cycles between active GTP-bound and inactive GDP-bound states. In its active state, binds to a variety of effector proteins playing a key role in the regulation of lysosomal positioning which is important for nutrient sensing, natural killer cell-mediated cytotoxicity and antigen presentation. Along with its effectors, orchestrates lysosomal transport and fusion. Localizes specifically to lysosomal membranes and mediates anterograde lysosomal motility by recruiting PLEKHM2, which in turn recruits the motor protein kinesin-1 on lysosomes. Required for lysosomal and cytolytic granule exocytosis. Critical factor involved in NK cell-mediated cytotoxicity. Drives the polarization of cytolytic granules and microtubule-organizing centers (MTOCs) toward the immune synapse between effector NK lymphocytes and target cells. In neurons, mediates the anterograde axonal long-range transport of presynaptic lysosome-related vesicles required for presynaptic biogenesis and synaptic function. Also acts as a regulator of endosome to lysosome trafficking pathways of special significance for host defense. Recruits RUFY1 onto early endosomes regulating endosomes to trans-Golgi network proteins retrieval. Regulates cargo trafficking to lysosomes by binding to PLEKHM1 and recruiting the HOPS subunit VPS41, resulting in functional assembly of the HOPS complex on lysosomal membranes. Plays an important role in cargo delivery to lysosomes for antigen presentation and microbial killing. Directs the intersection of CD1d with lipid antigens in lysosomes, and plays a role in intersecting phagosomes with lysosomes to generate phagolysosomes that kill microbes. Involved in the process of MHC II presentation. Regulates the delivery of antigens to lysosomes and the formation of MHC II-peptide complexes through the recruitment of the HOPS complex to lysosomes allowing the fusion of late endosomes to lysosomes. May play a role in chromosome segregation. In Macaca fascicularis (Crab-eating macaque), this protein is ADP-ribosylation factor-like protein 8B (ARL8B).